We begin with the raw amino-acid sequence, 147 residues long: UPF0047 protein sll1880 (147 aa).

Belongs to the UPF0047 family.

The chain is UPF0047 protein sll1880 from Synechocystis sp. (strain ATCC 27184 / PCC 6803 / Kazusa).